Reading from the N-terminus, the 653-residue chain is Zinc finger protein 59 (653 aa).

A KRAB domain is found at 14 to 86 (VTFRDVAVDF…VNEETGRPSP (73 aa)). C2H2-type zinc fingers lie at residues 172 to 194 (YECK…QSVH), 200 to 222 (YECK…QKCH), 256 to 278 (FACR…GLIH), 284 to 306 (YECN…QKIH), 312 to 334 (FQCK…QSSH), 340 to 362 (FECE…QRIH), 368 to 390 (FECN…QKTH), 396 to 418 (LECN…LKTH), 424 to 446 (FKCK…LTVH), 452 to 474 (YQCK…ESIH), 480 to 502 (FQCE…QKSH), 508 to 530 (FECK…KIVH), 536 to 558 (FECK…GAVH), 564 to 586 (YECS…RKIH), 592 to 614 (FKCQ…QSIH), and 620 to 642 (FECE…LRIH).

It belongs to the krueppel C2H2-type zinc-finger protein family. Expressed predominantly in the testis (at protein level).

Its subcellular location is the nucleus. May have a role during differentiation processes. In Mus musculus (Mouse), this protein is Zinc finger protein 59 (Zfp59).